A 757-amino-acid chain; its full sequence is Ecdysone receptor (757 aa).

The tract at residues 1 to 300 is modulating; sequence MMKRRWSNNG…GPAPRLQEEL (300 aa). Disordered stretches follow at residues 126–192 and 235–289; these read NSVG…GGGG and LNHH…KKIK. Residues 128 to 138 are compositionally biased toward gly residues; sequence VGGGGGGGGVP. A compositionally biased stretch (low complexity) spans 167 to 183; it reads NSNSNHSNSSSHHTNGH. 2 NR C4-type zinc fingers span residues 301 to 321 and 337 to 361; these read CLVCGDRASGYHYNALTCEGC and CKFGHACEMDMYMRRKCQECRLKKC. The segment at residues 301–373 is a DNA-binding region (nuclear receptor); it reads CLVCGDRASG…VGMRPECVVP (73 aa). The NR LBD domain maps to 442-677; that stretch reads NQLAVIYKLI…FLEEIWDVHA (236 aa). The segment covering 717-734 has biased composition (low complexity); that stretch reads TSMATSSSSSLSPSAAST. A disordered region spans residues 717–739; sequence TSMATSSSSSLSPSAASTPNGGA.

This sequence belongs to the nuclear hormone receptor family. NR1 subfamily.

The protein localises to the nucleus. Functionally, receptor for ecdysone. Binds to ecdysone response elements (ECRES). The sequence is that of Ecdysone receptor (EcR) from Lucilia cuprina (Green bottle fly).